A 333-amino-acid chain; its full sequence is Nucleoid-associated protein HAPS_0704 (333 aa).

The protein belongs to the YejK family.

The protein resides in the cytoplasm. The protein localises to the nucleoid. In Glaesserella parasuis serovar 5 (strain SH0165) (Haemophilus parasuis), this protein is Nucleoid-associated protein HAPS_0704.